A 126-amino-acid polypeptide reads, in one-letter code: Large ribosomal subunit protein bL17 (126 aa).

Belongs to the bacterial ribosomal protein bL17 family. In terms of assembly, part of the 50S ribosomal subunit. Contacts protein L32.

The chain is Large ribosomal subunit protein bL17 from Lawsonia intracellularis (strain PHE/MN1-00).